A 239-amino-acid chain; its full sequence is tRNA (guanine-N(1)-)-methyltransferase (239 aa).

Residues glycine 108 and leucine 127–leucine 132 contribute to the S-adenosyl-L-methionine site.

Belongs to the RNA methyltransferase TrmD family. As to quaternary structure, homodimer.

The protein resides in the cytoplasm. It carries out the reaction guanosine(37) in tRNA + S-adenosyl-L-methionine = N(1)-methylguanosine(37) in tRNA + S-adenosyl-L-homocysteine + H(+). Specifically methylates guanosine-37 in various tRNAs. The polypeptide is tRNA (guanine-N(1)-)-methyltransferase (Streptococcus pneumoniae serotype 19F (strain G54)).